Here is a 254-residue protein sequence, read N- to C-terminus: uncharacterized protein (254 aa).

This is an uncharacterized protein from Escherichia coli (strain K12).